The chain runs to 184 residues: MNRPVKGAADKAGKPKVKRKTREELEREARERKKDKKHRGHVAGSRTQEKASTDQRSGQRKAADPRIGSKKPVPLGVLDSAVAKPKPKSKPSAPVENVVAAKPTMSPEEELEMLENDSRLDALLDRLDSGETLSAKDQSWVDETLDRIDILMEELGIELGDDDEEEPQEDMLQLLKRNNPKDAF.

The interval 1-107 (MNRPVKGAAD…VVAAKPTMSP (107 aa)) is disordered. Positions 21–32 (TREELEREARER) are enriched in basic and acidic residues. The span at 80-95 (SAVAKPKPKSKPSAPV) shows a compositional bias: low complexity.

It belongs to the YihI family. In terms of assembly, interacts with Der.

Functionally, a GTPase-activating protein (GAP) that modifies Der/EngA GTPase function. May play a role in ribosome biogenesis. The polypeptide is Der GTPase-activating protein YihI (Pectobacterium carotovorum subsp. carotovorum (strain PC1)).